Reading from the N-terminus, the 479-residue chain is Cardiolipin synthase (479 aa).

2 helical membrane-spanning segments follow: residues 5-25 (SLLL…IIFL) and 34-54 (WAWV…YLIF). PLD phosphodiesterase domains are found at residues 216-243 (INYR…GDEY) and 392-419 (QNGF…DVRS). Active-site residues include H221, K223, D228, H397, K399, and D404.

The protein belongs to the phospholipase D family. Cardiolipin synthase subfamily.

It localises to the cell membrane. It catalyses the reaction 2 a 1,2-diacyl-sn-glycero-3-phospho-(1'-sn-glycerol) = a cardiolipin + glycerol. In terms of biological role, catalyzes the reversible phosphatidyl group transfer from one phosphatidylglycerol molecule to another to form cardiolipin (CL) (diphosphatidylglycerol) and glycerol. The sequence is that of Cardiolipin synthase (cls) from Oceanobacillus iheyensis (strain DSM 14371 / CIP 107618 / JCM 11309 / KCTC 3954 / HTE831).